A 311-amino-acid chain; its full sequence is Cytochrome c biogenesis protein CcsA (311 aa).

The next 8 membrane-spanning stretches (helical) occupy residues 11–31 (VLLL…LAFW), 44–64 (VVQL…LWRW), 68–88 (GHFP…GCTF), 101–121 (LVPA…SFAL), 146–166 (VIMM…AVLF), 217–237 (TITV…VWAN), 251–268 (TWAL…HTRL), and 280–300 (VAVS…LLGI).

Belongs to the CcmF/CycK/Ccl1/NrfE/CcsA family. May interact with ccs1.

It localises to the cellular thylakoid membrane. In terms of biological role, required during biogenesis of c-type cytochromes (cytochrome c6 and cytochrome f) at the step of heme attachment. The sequence is that of Cytochrome c biogenesis protein CcsA from Synechococcus sp. (strain RCC307).